A 200-amino-acid polypeptide reads, in one-letter code: Large ribosomal subunit protein uL4 (200 aa).

The disordered stretch occupies residues G38–A67.

It belongs to the universal ribosomal protein uL4 family. Part of the 50S ribosomal subunit.

Its function is as follows. One of the primary rRNA binding proteins, this protein initially binds near the 5'-end of the 23S rRNA. It is important during the early stages of 50S assembly. It makes multiple contacts with different domains of the 23S rRNA in the assembled 50S subunit and ribosome. In terms of biological role, forms part of the polypeptide exit tunnel. The chain is Large ribosomal subunit protein uL4 from Pseudomonas paraeruginosa (strain DSM 24068 / PA7) (Pseudomonas aeruginosa (strain PA7)).